Here is a 470-residue protein sequence, read N- to C-terminus: UDP-N-acetylmuramoylalanine--D-glutamate ligase (470 aa).

121 to 127 (GTNGKST) is a binding site for ATP.

The protein belongs to the MurCDEF family.

The protein localises to the cytoplasm. The enzyme catalyses UDP-N-acetyl-alpha-D-muramoyl-L-alanine + D-glutamate + ATP = UDP-N-acetyl-alpha-D-muramoyl-L-alanyl-D-glutamate + ADP + phosphate + H(+). It participates in cell wall biogenesis; peptidoglycan biosynthesis. Its function is as follows. Cell wall formation. Catalyzes the addition of glutamate to the nucleotide precursor UDP-N-acetylmuramoyl-L-alanine (UMA). The chain is UDP-N-acetylmuramoylalanine--D-glutamate ligase from Rhizobium johnstonii (strain DSM 114642 / LMG 32736 / 3841) (Rhizobium leguminosarum bv. viciae).